The sequence spans 266 residues: MRRYAILGATGNTGQALLNVLLQSPDNQIHAYCRSASKLNRLRPEISQHRQVKVWEGSLEDVSLLSECIRGTRAVFMVVAIPDNMPHCTIAQDCTNAVLNTLKKLQAEGCQSLPKLIVLSSASLEDSLCADVPPLIHRVLNIAAGNLYSDLAKAEKILRAEKHWVSTTFVKPGGLVHDVQRGHTLSTKTAKTPVSFLDVAAGMVEIADMDDKTYDMMNVSVNAIGDGTAFPWKGVYYVLTGLLFHFFPWTYKYFGDSPMPKPRKDL.

Belongs to the avfA family.

It participates in mycotoxin biosynthesis; aflatoxin biosynthesis. Its function is as follows. Oxidoreductase; part of the gene cluster that mediates the biosynthesis of aflatoxins, a group of polyketide-derived furanocoumarins, and part of the most toxic and carcinogenic compounds among the known mycotoxins. The four major aflatoxins produced by A.parasiticus are aflatoxin B1 (AFB1), aflatoxin B2 (AFB2), aflatoxin G1 (AFG1) and aflatoxin G2 (AFG2). Within the aflatoxin pathway, the oxidoreductase aflX seems to be involved in the conversion of versicolorin A (VERA) to demethylsterigmatocystin (DMST), through probable epoxide ring-opening step following versicolorin A oxidation required for the formation of the xanthone ring. The biosynthesis of aflatoxins begins with the norsolorinic acid synthase aflC that combines a hexanoyl starter unit produced by the fatty acid synthase aflA/aflB and 7 malonyl-CoA extender units to synthesize the precursor NOR. The second step is the conversion of NOR to averantin and requires the norsolorinic acid ketoreductase aflD, which catalyzes the dehydration of norsolorinic acid to form (1'S)-averantin. The norsolorinic acid reductases aflE and aflF may also play a role in the conversion of NOR to AVN. The cytochrome P450 monooxygenase aflG then catalyzes the hydroxylation of AVN to 5'hydroxyaverantin (HAVN). The next step is performed by the 5'-hydroxyaverantin dehydrogenase aflH that transforms HAVN to 5'-oxoaverantin (OAVN) which is further converted to averufin (AVF) by aflK that plays a dual role in the pathway, as a 5'-oxoaverantin cyclase that mediates conversion of 5'-oxoaverantin, as well as a versicolorin B synthase in a later step in the pathway. The averufin oxidase aflI catalyzes the conversion of AVF to versiconal hemiacetal acetate (VHA). VHA is then the substrate for the versiconal hemiacetal acetate esterase aflJ to yield versiconal (VAL). Versicolorin B synthase aflK then converts VAL to versicolorin B (VERB) by closing the bisfuran ring of aflatoxin which is required for DNA-binding, thus giving to aflatoxin its activity as a mutagen. Then, the activity of the versicolorin B desaturase aflL leads to versicolorin A (VERA). A branch point starts from VERB since it can also be converted to dihydrodemethylsterigmatocystin (DMDHST), probably also by aflL, VERA being a precursor for aflatoxins B1 and G1, and DMDHST for aflatoxins B2 and G2. Next, the versicolorin reductase aflM and the cytochrome P450 monooxygenase aflN are involved in conversion of VERA to demethylsterigmatocystin (DMST). AflX and aflY seem also involved in this step, through probable aflX-mediated epoxide ring-opening step following versicolorin A oxidation and aflY-mediated Baeyer-Villiger oxidation required for the formation of the xanthone ring. The methyltransferase aflO then leads to the modification of DMST to sterigmatocystin (ST), and of DMDHST to dihydrosterigmatocystin (DHST). Both ST and DHST are then substrates of the O-methyltransferase aflP to yield O-methylsterigmatocystin (OMST) and dihydro-O-methylsterigmatocystin (DHOMST), respectively. Finally OMST is converted to aflatoxins B1 and G1, and DHOMST to aflatoxins B2 and G2, via the action of several enzymes including O-methylsterigmatocystin oxidoreductase aflQ, the cytochrome P450 monooxygenase aflU, but also the NADH-dependent flavin oxidoreductase nadA which is specifically required for the synthesis of AFG1. The polypeptide is Oxidoreductase aflX (Aspergillus parasiticus (strain ATCC 56775 / NRRL 5862 / SRRC 143 / SU-1)).